Here is a 253-residue protein sequence, read N- to C-terminus: uncharacterized protein (253 aa).

The protein belongs to the MG439/MG440 family.

This is an uncharacterized protein from Mycoplasma pneumoniae (strain ATCC 29342 / M129 / Subtype 1) (Mycoplasmoides pneumoniae).